Here is a 502-residue protein sequence, read N- to C-terminus: Glycerol kinase (502 aa).

T14 provides a ligand contact to ADP. ATP-binding residues include T14, T15, and S16. Position 14 (T14) interacts with sn-glycerol 3-phosphate. R18 lines the ADP pocket. Residues R84, E85, and Y136 each contribute to the sn-glycerol 3-phosphate site. Positions 84, 85, and 136 each coordinate glycerol. A Phosphohistidine; by HPr modification is found at H232. D246 serves as a coordination point for sn-glycerol 3-phosphate. Glycerol-binding residues include D246 and Q247. ADP-binding residues include T268 and G311. Positions 268, 311, 315, and 412 each coordinate ATP. Residues G412 and N416 each coordinate ADP.

This sequence belongs to the FGGY kinase family. As to quaternary structure, homotetramer and homodimer (in equilibrium). In terms of processing, the phosphoenolpyruvate-dependent sugar phosphotransferase system (PTS), including enzyme I, and histidine-containing protein (HPr) are required for the phosphorylation, which leads to the activation of the enzyme.

The enzyme catalyses glycerol + ATP = sn-glycerol 3-phosphate + ADP + H(+). It participates in polyol metabolism; glycerol degradation via glycerol kinase pathway; sn-glycerol 3-phosphate from glycerol: step 1/1. Its activity is regulated as follows. Activated by phosphorylation and inhibited by fructose 1,6-bisphosphate (FBP). Key enzyme in the regulation of glycerol uptake and metabolism. Catalyzes the phosphorylation of glycerol to yield sn-glycerol 3-phosphate. This is Glycerol kinase from Streptococcus pneumoniae (strain 70585).